The sequence spans 368 residues: MKNYLNFETDIKNLEIEIDKLKDPYNQDGLSEVDTKKISESQKEIDNKLQEIYSNLDPWQTTLVARHEDRPKAKFFIDNLFEDFIPLSGDRYYGEDKSVLAGFAKFDEKSVLVIGQEKGDSLESRIERNFGMMRPEGYRKTIRLMKLANKFNIPIISFIDTPGAYPGVGAEERGQAEAIAKSIECCMSLNVPTLAIVIGEGGSGGAIALASSNKVIMLENAIYSVISPEGCATILWRDPKRTLEAAKAMKLSSKDLLELKVIDEIIPEPIGGAHRDRDLILDNVRKSIEKNLNEFFNMSGEEIFNHRKNKFLTIGRSKGFVNQIDDLSTLSMKESKVNLFIKNFFKSKLNLAVLFGVIVLLGYFIFSL.

The CoA carboxyltransferase C-terminal domain occupies 44 to 294; sequence EIDNKLQEIY…RKSIEKNLNE (251 aa).

The protein belongs to the AccA family. In terms of assembly, acetyl-CoA carboxylase is a heterohexamer composed of biotin carboxyl carrier protein (AccB), biotin carboxylase (AccC) and two subunits each of ACCase subunit alpha (AccA) and ACCase subunit beta (AccD).

The protein resides in the cytoplasm. The catalysed reaction is N(6)-carboxybiotinyl-L-lysyl-[protein] + acetyl-CoA = N(6)-biotinyl-L-lysyl-[protein] + malonyl-CoA. It functions in the pathway lipid metabolism; malonyl-CoA biosynthesis; malonyl-CoA from acetyl-CoA: step 1/1. Its function is as follows. Component of the acetyl coenzyme A carboxylase (ACC) complex. First, biotin carboxylase catalyzes the carboxylation of biotin on its carrier protein (BCCP) and then the CO(2) group is transferred by the carboxyltransferase to acetyl-CoA to form malonyl-CoA. The chain is Acetyl-coenzyme A carboxylase carboxyl transferase subunit alpha from Pelagibacter ubique (strain HTCC1062).